Here is a 206-residue protein sequence, read N- to C-terminus: MTTPTFDTIEAQASYGIGLQVGQQLSESGLEGLLPEALVAGIADALEGKHPAVPVDVVHRALREIHERADAVRRQRFQAMAAEGVKYLEENAKKEGVNSTESGLQFRVINQGEGAIPARTDRVRVHYTGKLIDGTVFDSSVARGEPAEFPVNGVIPGWIEALTLMPVGSKWELTIPQELAYGERGAGASIPPFSTLVFEVELLEIL.

Residues 120–206 form the PPIase FKBP-type domain; that stretch reads TDRVRVHYTG…VFEVELLEIL (87 aa).

As to quaternary structure, homodimer.

The protein localises to the cytoplasm. It localises to the periplasm. The catalysed reaction is [protein]-peptidylproline (omega=180) = [protein]-peptidylproline (omega=0). Strongly inhibited by FK506. PPIases accelerate the folding of proteins. Catalyzes the cis-trans isomerization of proline imidic peptide bonds in oligopeptides. Displays a preference for substrates with a lysyl residue in the P1 position. This Escherichia coli (strain K12) protein is FKBP-type 22 kDa peptidyl-prolyl cis-trans isomerase (fklB).